A 124-amino-acid chain; its full sequence is p53-regulated apoptosis-inducing protein 1 (124 aa).

A compositionally biased stretch (polar residues) spans 1 to 16 (MGSSSEASFRSAQASC). The tract at residues 1–46 (MGSSSEASFRSAQASCSGARRQGLGRGDQNLSVMPPNGRAQTHTPG) is disordered.

As to expression, only found to be expressed in thymus.

The protein resides in the mitochondrion. In terms of biological role, may play an important role in mediating p53/TP53-dependent apoptosis. This Homo sapiens (Human) protein is p53-regulated apoptosis-inducing protein 1 (TP53AIP1).